Reading from the N-terminus, the 239-residue chain is MNKNIIIKSIAALTILTSITGVGTTMVEGIQQTAKAENTVKQITNTNVAPYSGVTWMGAGTGFVVGNHTIITNKHVTYHMKVGDEIKAHPNGFYNNGGGLYKVTKIVDYPGKEDIAVVQVEEKSTQPKGRKFKDFTSKFNIASEAKENEPISVIGYPNPNGNKLQMYESTGKVLSVNGNIVSSDAIIQPGSSGSPILNSKHEAIGVIYAGNKPSGESTRGFAVYFSPEIKKFIADNLDK.

A signal peptide spans 1–36; sequence MNKNIIIKSIAALTILTSITGVGTTMVEGIQQTAKA. Residues histidine 75, aspartate 114, and serine 192 each act as charge relay system in the active site.

This sequence belongs to the peptidase S1B family.

It is found in the secreted. The sequence is that of Serine protease SplF (splF) from Staphylococcus aureus (strain NCTC 8325 / PS 47).